A 215-amino-acid polypeptide reads, in one-letter code: Translation initiation factor IF-3 (215 aa).

The segment at 159–215 is disordered; that stretch reads SAEVQQPPKREGRNMIMFLGPRKTPLQKDKPEQATKAERTLPIAKPPGKTAAPAAAN. Over residues 184 to 197 the composition is skewed to basic and acidic residues; sequence LQKDKPEQATKAER. Low complexity predominate over residues 200–215; it reads PIAKPPGKTAAPAAAN.

Belongs to the IF-3 family. In terms of assembly, monomer.

It is found in the cytoplasm. Its function is as follows. IF-3 binds to the 30S ribosomal subunit and shifts the equilibrium between 70S ribosomes and their 50S and 30S subunits in favor of the free subunits, thus enhancing the availability of 30S subunits on which protein synthesis initiation begins. This Synechococcus sp. (strain RCC307) protein is Translation initiation factor IF-3.